The primary structure comprises 327 residues: Meiotic coiled-coil protein 6 (327 aa).

The stretch at 66–188 (DAFERDSTQR…TETKEMNKIK (123 aa)) forms a coiled coil. Residues 175–199 (RRMETETKEMNKIKPKNDSESDRFK) are compositionally biased toward basic and acidic residues. Positions 175–234 (RRMETETKEMNKIKPKNDSESDRFKRNSQSLSQQSPLLDVHSPDNSNHRTMLNINNSSPI) are disordered. Positions 202–212 (SQSLSQQSPLL) are enriched in low complexity. A compositionally biased stretch (polar residues) spans 217–232 (PDNSNHRTMLNINNSS). The stretch at 243–297 (NEVKNRISRLQKTFADLENQHHSFQQICQTLRKRLENDSSTTKQRLSKLEEIIRN) forms a coiled coil.

As to quaternary structure, interacts with alp4, kms1 and mbo1.

The protein resides in the nucleus. It localises to the cytoplasm. It is found in the cytoskeleton. The protein localises to the microtubule organizing center. Its subcellular location is the spindle pole body. In terms of biological role, has a role in meiotic nuclear oscillation and recombination. Required to remodel astral microtubules into the 'horsetail' astral array maintaining the 'horsetail' nuclear movement. Promotes homologous paring of chromosomes during this movement. This is Meiotic coiled-coil protein 6 (mcp6) from Schizosaccharomyces pombe (strain 972 / ATCC 24843) (Fission yeast).